We begin with the raw amino-acid sequence, 179 residues long: Large ribosomal subunit protein uL5 (179 aa).

This sequence belongs to the universal ribosomal protein uL5 family. Part of the 50S ribosomal subunit; part of the 5S rRNA/L5/L18/L25 subcomplex. Contacts the 5S rRNA and the P site tRNA. Forms a bridge to the 30S subunit in the 70S ribosome.

Its function is as follows. This is one of the proteins that bind and probably mediate the attachment of the 5S RNA into the large ribosomal subunit, where it forms part of the central protuberance. In the 70S ribosome it contacts protein S13 of the 30S subunit (bridge B1b), connecting the 2 subunits; this bridge is implicated in subunit movement. Contacts the P site tRNA; the 5S rRNA and some of its associated proteins might help stabilize positioning of ribosome-bound tRNAs. This Aromatoleum aromaticum (strain DSM 19018 / LMG 30748 / EbN1) (Azoarcus sp. (strain EbN1)) protein is Large ribosomal subunit protein uL5.